Here is a 314-residue protein sequence, read N- to C-terminus: Serine acetyltransferase 1, chloroplastic (314 aa).

Belongs to the transferase hexapeptide repeat family. In terms of assembly, homomultimer. Interacts with OASA1 and CYP20-3. Component of the cysteine synthase complex (CSC) composed of two OAS-TL dimers and one SAT hexamer. As to expression, mostly expressed in leaves. Localized in cortex, trichomes and vascular tissues, particularly in phloem.

The protein resides in the plastid. It is found in the chloroplast. It localises to the cytoplasm. It carries out the reaction L-serine + acetyl-CoA = O-acetyl-L-serine + CoA. It participates in amino-acid biosynthesis; L-cysteine biosynthesis; L-cysteine from L-serine: step 1/2. Serine acetyltransferase which catalyzes the formation of O-acetyl-L-serine from acetyl-CoA and L-serine. Also displays O-acetylserine (thio1)-lyase activity in vitro. May be involved in detoxification process by mediating the production of glutathione. The sequence is that of Serine acetyltransferase 1, chloroplastic (SAT1) from Arabidopsis thaliana (Mouse-ear cress).